Here is a 251-residue protein sequence, read N- to C-terminus: YlmG homolog protein 2, chloroplastic (251 aa).

The N-terminal 51 residues, 1 to 51, are a transit peptide targeting the chloroplast; it reads MEASANEPAMKSLKSNPSGPIPNFFVSLSSAFTQTPLVRSNKPNLLLLPPV. The next 2 helical transmembrane spans lie at 119-139 and 183-203; these read GFAAVLPGDSVAGLVVANGLI and FIPPLGGLDLSPILAFLVLNA. Over residues 232-243 the composition is skewed to basic residues; that stretch reads VRRRRLSSHKDH. The disordered stretch occupies residues 232 to 251; it reads VRRRRLSSHKDHRPSSASMT.

The protein belongs to the YggT family.

It localises to the plastid. Its subcellular location is the chloroplast thylakoid membrane. Its function is as follows. Not required for the biogenesis and accumulation of native cytochrome b6 in the thylakoid membrane. Not functionally involved in the pathway for covalent binding of the c-type heme to cytochrome b6. The protein is YlmG homolog protein 2, chloroplastic of Arabidopsis thaliana (Mouse-ear cress).